The sequence spans 265 residues: UPF0294 protein KPK_4510 (265 aa).

It belongs to the UPF0294 family.

The protein resides in the cytoplasm. The polypeptide is UPF0294 protein KPK_4510 (Klebsiella pneumoniae (strain 342)).